The sequence spans 459 residues: Cysteine--tRNA ligase (459 aa).

Position 27 (Cys27) interacts with Zn(2+). Positions 29-39 (ITVYDDCHIGH) match the 'HIGH' region motif. Zn(2+)-binding residues include Cys208, His233, and Glu237. Residues 265–269 (KMSKS) carry the 'KMSKS' region motif. Residue Lys268 participates in ATP binding.

It belongs to the class-I aminoacyl-tRNA synthetase family. In terms of assembly, monomer. Zn(2+) is required as a cofactor.

The protein localises to the cytoplasm. It carries out the reaction tRNA(Cys) + L-cysteine + ATP = L-cysteinyl-tRNA(Cys) + AMP + diphosphate. This is Cysteine--tRNA ligase from Francisella philomiragia subsp. philomiragia (strain ATCC 25017 / CCUG 19701 / FSC 153 / O#319-036).